A 185-amino-acid chain; its full sequence is Ubiquitin-conjugating enzyme E2 5 (185 aa).

The 148-residue stretch at 1-148 (MSSPSKRREM…VKEYCEKYAK (148 aa)) folds into the UBC core domain. Cysteine 85 functions as the Glycyl thioester intermediate in the catalytic mechanism. Residues 146–185 (YAKPRADTEEMSSDDEMSEDEYASDGDDEDDVAIAGKLDP) are disordered. Acidic residues predominate over residues 154–177 (EEMSSDDEMSEDEYASDGDDEDDV).

This sequence belongs to the ubiquitin-conjugating enzyme family. As to expression, expressed in developing ovules, but not in vascular tissues.

The catalysed reaction is S-ubiquitinyl-[E1 ubiquitin-activating enzyme]-L-cysteine + [E2 ubiquitin-conjugating enzyme]-L-cysteine = [E1 ubiquitin-activating enzyme]-L-cysteine + S-ubiquitinyl-[E2 ubiquitin-conjugating enzyme]-L-cysteine.. The protein operates within protein modification; protein ubiquitination. Functionally, accepts the ubiquitin from the E1 complex and catalyzes its covalent attachment to other proteins. The polypeptide is Ubiquitin-conjugating enzyme E2 5 (UBC5) (Arabidopsis thaliana (Mouse-ear cress)).